A 63-amino-acid chain; its full sequence is Small ribosomal subunit protein bS21 (63 aa).

This sequence belongs to the bacterial ribosomal protein bS21 family.

The sequence is that of Small ribosomal subunit protein bS21 from Phocaeicola vulgatus (strain ATCC 8482 / DSM 1447 / JCM 5826 / CCUG 4940 / NBRC 14291 / NCTC 11154) (Bacteroides vulgatus).